A 310-amino-acid chain; its full sequence is Prohibitin-2 (310 aa).

A helical; Signal-anchor for type II membrane protein membrane pass occupies residues 38-58 (FAGLGGLLLLGGGALFINNAL). The interaction with ATG8 stretch occupies residues 130 to 144 (DVVQLPTIYRTLGQD). Residues 138-141 (YRTL) carry the AIM motif. Residues 212-253 (NAVEAKQIAQQDAQRAAFVVDKARQEKQGMVVRAQGEAKSAE) adopt a coiled-coil conformation.

Belongs to the prohibitin family. As to quaternary structure, the mitochondrial prohibitin complex consists of two subunits (PHB1 and PHB2). The subunits assemble into a membrane-associated ring-shaped supercomplex of approximately 1 mDa. The mitochondrial prohibitin complex interacts with the m-AAA protease, a heterohexamer composed of YTA12/RCA1 and YTA10/AFG3. The mitochondrial prohibitin complex interacts with ATG8 and the interaction may support mitophagosome assembly. Post-translationally, the N-terminus is blocked.

Its subcellular location is the mitochondrion inner membrane. Its function is as follows. Prohibitin probably acts as a holdase/unfoldase for the stabilization of newly synthesized mitochondrial proteins. Involved in mitophagy; may act as an adapter for ATG8 that supports mitophagosome assembly. Negatively regulates the proteolytic processing of ATG32 via the i-AAA protease. Acts as a negative regulator of the m-AAA protease. The chain is Prohibitin-2 (PHB2) from Saccharomyces cerevisiae (strain ATCC 204508 / S288c) (Baker's yeast).